We begin with the raw amino-acid sequence, 326 residues long: Type II methyltransferase M.EcoRI (326 aa).

The protein belongs to the N(4)/N(6)-methyltransferase family. In terms of assembly, monomer.

The enzyme catalyses a 2'-deoxyadenosine in DNA + S-adenosyl-L-methionine = an N(6)-methyl-2'-deoxyadenosine in DNA + S-adenosyl-L-homocysteine + H(+). Functionally, a methylase that recognizes the double-stranded sequence 5'-GAATTC-3', methylates A-3 on both strands, and protects the DNA from cleavage by the EcoRI endonuclease. In Escherichia coli, this protein is Type II methyltransferase M.EcoRI (ecoRIM).